Consider the following 235-residue polypeptide: Phosphoglycolate phosphatase (235 aa).

The active-site Nucleophile is the aspartate 14. Mg(2+)-binding residues include aspartate 14, aspartate 16, and aspartate 177.

It belongs to the HAD-like hydrolase superfamily. CbbY/CbbZ/Gph/YieH family. Mg(2+) serves as cofactor.

The catalysed reaction is 2-phosphoglycolate + H2O = glycolate + phosphate. Its pathway is organic acid metabolism; glycolate biosynthesis; glycolate from 2-phosphoglycolate: step 1/1. Its function is as follows. Specifically catalyzes the dephosphorylation of 2-phosphoglycolate. Is involved in the dissimilation of the intracellular 2-phosphoglycolate formed during the DNA repair of 3'-phosphoglycolate ends, a major class of DNA lesions induced by oxidative stress. This Neisseria meningitidis serogroup A / serotype 4A (strain DSM 15465 / Z2491) protein is Phosphoglycolate phosphatase.